The primary structure comprises 307 residues: Mycothiol acetyltransferase (307 aa).

2 consecutive N-acetyltransferase domains span residues 12-152 (TRTD…APIP) and 160-307 (VTLR…YQRS). E43 provides a ligand contact to 1D-myo-inositol 2-(L-cysteinylamino)-2-deoxy-alpha-D-glucopyranoside. 87 to 89 (LAV) is a binding site for acetyl-CoA. 3 residues coordinate 1D-myo-inositol 2-(L-cysteinylamino)-2-deoxy-alpha-D-glucopyranoside: E187, K227, and E239. Acetyl-CoA is bound by residues 243-245 (LGV) and 250-256 (HGGGLGK). Residue Y278 participates in 1D-myo-inositol 2-(L-cysteinylamino)-2-deoxy-alpha-D-glucopyranoside binding.

The protein belongs to the acetyltransferase family. MshD subfamily. In terms of assembly, monomer.

The catalysed reaction is 1D-myo-inositol 2-(L-cysteinylamino)-2-deoxy-alpha-D-glucopyranoside + acetyl-CoA = mycothiol + CoA + H(+). Catalyzes the transfer of acetyl from acetyl-CoA to desacetylmycothiol (Cys-GlcN-Ins) to form mycothiol. This chain is Mycothiol acetyltransferase, found in Salinispora arenicola (strain CNS-205).